The primary structure comprises 288 residues: MITKTTRWPSPAKLNLFLYINGQQENGYHELQTLFQFIDLCDHLTITANQSGQITLAPDIPGVKTEDNLIWKAATLLQQHSQCEFGAHIEIEKILPMGGGIGGGSSNAATVLVALNFLWQLNLSNDTLAALGVKLGADVPIFVHGFAAFAEGIGEKLQPATPKELWYVLIKPEVSIATVDVFTHPNLVRNTPKQPLNALLEATYVNDCEKIVRSVYPEVDYQLSWLLEYAPSRLTGTGACVFAEFNSEKEAQDVYSLIPDNATGFIARGMNTSPLNRTLEEYKSLCKI.

K13 is a catalytic residue. ATP is bound at residue 96 to 106 (PMGGGIGGGSS). D138 is a catalytic residue.

It belongs to the GHMP kinase family. IspE subfamily.

The enzyme catalyses 4-CDP-2-C-methyl-D-erythritol + ATP = 4-CDP-2-C-methyl-D-erythritol 2-phosphate + ADP + H(+). Its pathway is isoprenoid biosynthesis; isopentenyl diphosphate biosynthesis via DXP pathway; isopentenyl diphosphate from 1-deoxy-D-xylulose 5-phosphate: step 3/6. Its function is as follows. Catalyzes the phosphorylation of the position 2 hydroxy group of 4-diphosphocytidyl-2C-methyl-D-erythritol. The sequence is that of 4-diphosphocytidyl-2-C-methyl-D-erythritol kinase from Aliivibrio fischeri (strain ATCC 700601 / ES114) (Vibrio fischeri).